A 416-amino-acid polypeptide reads, in one-letter code: Serine hydroxymethyltransferase (416 aa).

(6S)-5,6,7,8-tetrahydrofolate-binding positions include Leu-121 and 125-127 (GHL). Lys-229 bears the N6-(pyridoxal phosphate)lysine mark.

Belongs to the SHMT family. In terms of assembly, homodimer. Pyridoxal 5'-phosphate serves as cofactor.

Its subcellular location is the cytoplasm. It catalyses the reaction (6R)-5,10-methylene-5,6,7,8-tetrahydrofolate + glycine + H2O = (6S)-5,6,7,8-tetrahydrofolate + L-serine. Its pathway is one-carbon metabolism; tetrahydrofolate interconversion. The protein operates within amino-acid biosynthesis; glycine biosynthesis; glycine from L-serine: step 1/1. Catalyzes the reversible interconversion of serine and glycine with tetrahydrofolate (THF) serving as the one-carbon carrier. This reaction serves as the major source of one-carbon groups required for the biosynthesis of purines, thymidylate, methionine, and other important biomolecules. Also exhibits THF-independent aldolase activity toward beta-hydroxyamino acids, producing glycine and aldehydes, via a retro-aldol mechanism. The protein is Serine hydroxymethyltransferase of Aromatoleum aromaticum (strain DSM 19018 / LMG 30748 / EbN1) (Azoarcus sp. (strain EbN1)).